The following is a 146-amino-acid chain: uncharacterized protein (146 aa).

A helical transmembrane segment spans residues 7 to 24; sequence VIALFLVTGLTLYAIRLL.

It localises to the membrane. This is an uncharacterized protein from Haemophilus influenzae (strain ATCC 51907 / DSM 11121 / KW20 / Rd).